The following is a 225-amino-acid chain: Tryptophan synthase beta chain (225 aa).

The protein belongs to the TrpB family. In terms of assembly, tetramer of two alpha and two beta chains. Pyridoxal 5'-phosphate is required as a cofactor.

It catalyses the reaction (1S,2R)-1-C-(indol-3-yl)glycerol 3-phosphate + L-serine = D-glyceraldehyde 3-phosphate + L-tryptophan + H2O. The protein operates within amino-acid biosynthesis; L-tryptophan biosynthesis; L-tryptophan from chorismate: step 5/5. Functionally, the beta subunit is responsible for the synthesis of L-tryptophan from indole and L-serine. This chain is Tryptophan synthase beta chain (trpB), found in Buchnera aphidicola subsp. Rhopalosiphum padi.